The following is a 147-amino-acid chain: Protein LOL1 (147 aa).

The disordered stretch occupies residues Met1 to Ser38. Residues Ser22–Ser38 are compositionally biased toward polar residues. The segment at Gln47 to Val77 is putative zinc finger.

The protein resides in the nucleus. Putative zinc finger that may be involved in programmed cell death and defense response. This chain is Protein LOL1 (LOL1), found in Oryza sativa subsp. japonica (Rice).